Here is a 26-residue protein sequence, read N- to C-terminus: Coenzyme PQQ synthesis protein A (26 aa).

A cross-link (pyrroloquinoline quinone (Glu-Tyr)) is located at residues 16–20 (EINMY).

This sequence belongs to the PqqA family.

It participates in cofactor biosynthesis; pyrroloquinoline quinone biosynthesis. Required for coenzyme pyrroloquinoline quinone (PQQ) biosynthesis. PQQ is probably formed by cross-linking a specific glutamate to a specific tyrosine residue and excising these residues from the peptide. The sequence is that of Coenzyme PQQ synthesis protein A from Cereibacter sphaeroides (strain ATCC 17029 / ATH 2.4.9) (Rhodobacter sphaeroides).